Reading from the N-terminus, the 490-residue chain is Bifunctional protein HldE (490 aa).

A ribokinase region spans residues Met1–Tyr330. ATP is bound at residue Asn205–Glu208. Residue Asp275 is part of the active site. The segment at Phe356–Gly490 is cytidylyltransferase.

In the N-terminal section; belongs to the carbohydrate kinase PfkB family. It in the C-terminal section; belongs to the cytidylyltransferase family. In terms of assembly, homodimer.

The catalysed reaction is D-glycero-beta-D-manno-heptose 7-phosphate + ATP = D-glycero-beta-D-manno-heptose 1,7-bisphosphate + ADP + H(+). It carries out the reaction D-glycero-beta-D-manno-heptose 1-phosphate + ATP + H(+) = ADP-D-glycero-beta-D-manno-heptose + diphosphate. It participates in nucleotide-sugar biosynthesis; ADP-L-glycero-beta-D-manno-heptose biosynthesis; ADP-L-glycero-beta-D-manno-heptose from D-glycero-beta-D-manno-heptose 7-phosphate: step 1/4. Its pathway is nucleotide-sugar biosynthesis; ADP-L-glycero-beta-D-manno-heptose biosynthesis; ADP-L-glycero-beta-D-manno-heptose from D-glycero-beta-D-manno-heptose 7-phosphate: step 3/4. Catalyzes the phosphorylation of D-glycero-D-manno-heptose 7-phosphate at the C-1 position to selectively form D-glycero-beta-D-manno-heptose-1,7-bisphosphate. Functionally, catalyzes the ADP transfer from ATP to D-glycero-beta-D-manno-heptose 1-phosphate, yielding ADP-D-glycero-beta-D-manno-heptose. The polypeptide is Bifunctional protein HldE (Syntrophotalea carbinolica (strain DSM 2380 / NBRC 103641 / GraBd1) (Pelobacter carbinolicus)).